Reading from the N-terminus, the 311-residue chain is Putative dihydroorotate dehydrogenase A (fumarate) (311 aa).

Substrate is bound by residues Lys-45, 69–73 (NSMGL), and Asn-128. 45–46 (KT) serves as a coordination point for FMN. Asn-128 serves as a coordination point for FMN. The Nucleophile role is filled by Cys-131. Residues Lys-165 and Val-193 each coordinate FMN. 194–195 (NS) is a binding site for substrate. FMN-binding positions include Gly-220, 248 to 249 (GG), and 270 to 271 (GT).

It belongs to the dihydroorotate dehydrogenase family. Type 1 subfamily. In terms of assembly, homodimer. The cofactor is FMN.

The protein localises to the cytoplasm. It catalyses the reaction (S)-dihydroorotate + fumarate = orotate + succinate. Its pathway is pyrimidine metabolism; UMP biosynthesis via de novo pathway. Catalyzes the conversion of dihydroorotate to orotate with fumarate as the electron acceptor. This chain is Putative dihydroorotate dehydrogenase A (fumarate) (pyrD), found in Streptococcus pyogenes serotype M5 (strain Manfredo).